A 142-amino-acid chain; its full sequence is Large ribosomal subunit protein uL11 (142 aa).

The protein belongs to the universal ribosomal protein uL11 family. Part of the ribosomal stalk of the 50S ribosomal subunit. Interacts with L10 and the large rRNA to form the base of the stalk. L10 forms an elongated spine to which L12 dimers bind in a sequential fashion forming a multimeric L10(L12)X complex. Post-translationally, one or more lysine residues are methylated.

Functionally, forms part of the ribosomal stalk which helps the ribosome interact with GTP-bound translation factors. This Pelotomaculum thermopropionicum (strain DSM 13744 / JCM 10971 / SI) protein is Large ribosomal subunit protein uL11.